Reading from the N-terminus, the 520-residue chain is Cell division control protein 3 (520 aa).

The span at 1 to 24 (MSLKEEQVSIKQDPEQEERQHDQF) shows a compositional bias: basic and acidic residues. The disordered stretch occupies residues 1–83 (MSLKEEQVSI…SSQSEKGQVL (83 aa)). At serine 2 the chain carries N-acetylserine. Serine 2 is modified (phosphoserine). Lysine 4 is covalently cross-linked (Glycyl lysine isopeptide (Lys-Gly) (interchain with G-Cter in SUMO)). Serine 9 carries the post-translational modification Phosphoserine. Glycyl lysine isopeptide (Lys-Gly) (interchain with G-Cter in SUMO) cross-links involve residues lysine 11 and lysine 30. At threonine 47 the chain carries Phosphothreonine. A compositionally biased stretch (basic and acidic residues) spans 51-64 (DSERFEAAESDVKV). Phosphoserine is present on serine 60. Residue lysine 63 forms a Glycyl lysine isopeptide (Lys-Gly) (interchain with G-Cter in SUMO) linkage. Serine 77 carries the phosphoserine modification. Residues 116-411 (NGFSFNLLCV…ENYRSSKLAK (296 aa)) form the Septin-type G domain. Residues 126–133 (GPDGIGKT) are G1 motif. A GTP-binding site is contributed by 126 to 133 (GPDGIGKT). Residues 156-167 (ELANDQEEEEGQ) show a composition bias toward acidic residues. The segment at 156–181 (ELANDQEEEEGQGEGHENQSQEQRHK) is disordered. A compositionally biased stretch (basic and acidic residues) spans 168-179 (GEGHENQSQEQR). Serine 175 carries the post-translational modification Phosphoserine. Residues 204 to 207 (DTEG) are G3 motif. Residues glycine 207, 287–295 (KSDILTDEE), glycine 344, and arginine 360 each bind GTP. Residues 286 to 289 (AKSD) are G4 motif. Lysine 287 participates in a covalent cross-link: Glycyl lysine isopeptide (Lys-Gly) (interchain with G-Cter in SUMO). Residues 427–508 (ISKQQEEKTL…INSASPNVNH (82 aa)) are a coiled coil. Threonine 468 bears the Phosphothreonine mark. Residues 496–520 (ELSINSASPNVNHSPVPTKKKGFLR) are disordered. Polar residues predominate over residues 497–510 (LSINSASPNVNHSP). Serine 509 is subject to Phosphoserine.

It belongs to the TRAFAC class TrmE-Era-EngA-EngB-Septin-like GTPase superfamily. Septin GTPase family. In terms of assembly, component of the septin complex which consists of CDC3, CDC10, CDC11, CDC12 and probably SHS1 and rearranges to a cortical collar of highly ordered filaments at the mother-bud-neck. A complex formed by CDC3, CDC10, CDC11 and CDC12 is capable of forming long filaments in vitro and the components seem to be present in a 2:2:2:2 arrangement in vivo. The filaments are proposed to be formed by the end-to-end polymerization of CDC3-CDC12-CDC11 complexes with CDC10 serving as a bridge to bundle the polymers into paired filaments. Component of the GIN4 complex composed of at least BNI5, CDC3, CDC10, CDC11, CDC12, GIN4, NAP1 and SHS1. Self-associates. Interacts with SIZ1 and SYP1. Post-translationally, phosphorylated by CDC28. Phosphorylation at the end of G1 may facilitate initiation of a new cell cycle by promoting disassembly of the obsolete septin ring from the previous cell cycle. In terms of processing, sumoylated during mitosis on the mother cell side of the bud neck by UBC9/SIZ1. Sumoylation probably plays a central role in regulating septin ring disassembly during the cell cycle.

Its subcellular location is the membrane. The protein localises to the bud neck. In terms of biological role, septins are GTPases involved in cytokinesis that assemble early in the cell cycle as a patch at the incipient bud site and form a ring approximate 15 minutes before bud emergence, which transforms into an hour-glass shaped collar of cortical filaments that spans both sides of the mother-bud neck. This collar persists until just before cytokinesis, when it splits into two rings that occupy opposite sides of the neck. The septins at the bud neck serve as a structural scaffold that recruits different components involved in diverse processes at specific stages during the cell cycle. Many proteins bind asymmetrically to the septin collar. The septin assembly is regulated by protein kinases GIN4 and/or CLA4. May act by recruiting MYO1 and HOF1, a protein involved in septation, to the site of cleavage. Septins are also involved in cell morphogenesis, bud site selection, chitin deposition, cell cycle regulation, cell compartmentalization and spore wall formation. This is Cell division control protein 3 (CDC3) from Saccharomyces cerevisiae (strain ATCC 204508 / S288c) (Baker's yeast).